The following is an 802-amino-acid chain: Phenylalanine--tRNA ligase beta subunit (802 aa).

The region spanning 40–155 (SASLKNVVVG…AHVETGVSAI (116 aa)) is the tRNA-binding domain. A B5 domain is found at 409–484 (KAVNKIETSL…RIYGYDEIPV (76 aa)). Residues Asp462, Asp468, Glu471, and Glu472 each contribute to the Mg(2+) site. Positions 709–802 (PRYPEMTRDL…LQEKLHAIIR (94 aa)) constitute an FDX-ACB domain.

The protein belongs to the phenylalanyl-tRNA synthetase beta subunit family. Type 1 subfamily. In terms of assembly, tetramer of two alpha and two beta subunits. Mg(2+) serves as cofactor.

The protein resides in the cytoplasm. The enzyme catalyses tRNA(Phe) + L-phenylalanine + ATP = L-phenylalanyl-tRNA(Phe) + AMP + diphosphate + H(+). The protein is Phenylalanine--tRNA ligase beta subunit of Listeria monocytogenes serotype 4b (strain F2365).